Here is an 868-residue protein sequence, read N- to C-terminus: mRNA-capping enzyme (868 aa).

Catalysis depends on Lys282, which acts as the N6-GMP-lysine intermediate. One can recognise an mRNA cap 0 methyltransferase domain in the interval Gly594 to Asn868. S-adenosyl-L-methionine is bound by residues Lys607, Gly624, Asp646, and Leu710–Ile712.

The protein in the N-terminal section; belongs to the dsDNA virus mRNA guanylyltransferase family. In the C-terminal section; belongs to the class I-like SAM-binding methyltransferase superfamily. mRNA cap 0 methyltransferase family. In terms of assembly, part of the viral DNA-directed RNA polymerase that consists of 8 polII-like subunits (RPB1, RPB2, RPB3, RPB5, RPB6, RPB7, RPB9, RPB10), a capping enzyme and a termination factor.

It localises to the virion. The catalysed reaction is a 5'-end triphospho-ribonucleoside in mRNA + H2O = a 5'-end diphospho-ribonucleoside in mRNA + phosphate + H(+). It carries out the reaction a 5'-end diphospho-ribonucleoside in mRNA + GTP + H(+) = a 5'-end (5'-triphosphoguanosine)-ribonucleoside in mRNA + diphosphate. It catalyses the reaction a 5'-end (5'-triphosphoguanosine)-ribonucleoside in mRNA + S-adenosyl-L-methionine = a 5'-end (N(7)-methyl 5'-triphosphoguanosine)-ribonucleoside in mRNA + S-adenosyl-L-homocysteine. It participates in mRNA processing; mRNA capping. Functionally, probably catalyzes the second reaction in the mRNA cap formation pathway. Forms a covalent complex with GTP. In Ornithodoros (relapsing fever ticks), this protein is mRNA-capping enzyme.